Consider the following 3014-residue polypeptide: Genome polyprotein (3014 aa).

Ser2 is modified (N-acetylserine; by host). The tract at residues 2 to 23 (STNPKPQRKTKRNTNRRPQDVK) is interaction with STAT1. The segment at 2–58 (STNPKPQRKTKRNTNRRPQDVKFPGGGQIVGGVYLLPRRGPKLGVRATRKNSERSQP) is interaction with EIF2AK2/PKR. The segment at 2–59 (STNPKPQRKTKRNTNRRPQDVKFPGGGQIVGGVYLLPRRGPKLGVRATRKNSERSQPR) is interaction with DDX3X. Positions 2–75 (STNPKPQRKT…PKARRPTGRS (74 aa)) are disordered. At 2-168 (STNPKPQRKT…EDGINYATGN (167 aa)) the chain is on the cytoplasmic side. 2 consecutive short sequence motifs (nuclear localization signal) follow at residues 5-13 (PKPQRKTKR) and 38-43 (PRRGPK). Basic residues predominate over residues 7–16 (PQRKTKRNTN). Ser53 bears the Phosphoserine; by host mark. 2 consecutive short sequence motifs (nuclear localization signal) follow at residues 58–64 (PRGRRQP) and 66–71 (PKARRP). The span at 58–72 (PRGRRQPIPKARRPT) shows a compositional bias: basic residues. A phosphoserine; by host mark is found at Ser99 and Ser116. The interval 112–152 (PRRKSPNLGRVIHTLTCGFPHLMGYIPLVGGPVGGVSRALA) is important for endoplasmic reticulum and mitochondrial localization. The segment at 122–173 (VIHTLTCGFPHLMGYIPLVGGPVGGVSRALAHGVKVLEDGINYATGNLPGCP) is interaction with APOA2. Positions 164–167 (YATG) are important for lipid droplets localization. Residues 169–189 (LPGCPFSIFVLALLWCLTVPA) traverse the membrane as a helical segment. Residues 178–191 (VLALLWCLTVPASA) constitute a propeptide, ER anchor for the core protein, removed in mature form by host signal peptidase. The Lumenal segment spans residues 190–358 (SAVPYRNASG…AGGHWGVLLA (169 aa)). N-linked (GlcNAc...) asparagine; by host glycans are attached at residues Asn196, Asn209, and Asn234. Residues 265 to 296 (LAGGAAFCSALYVGDACGALSLVGQMFTYKPR) are important for fusion. Residue Asn305 is glycosylated (N-linked (GlcNAc...) asparagine; by host). A helical transmembrane segment spans residues 359-379 (AAYFASTANWAKVILVLFLFA). Topologically, residues 380-726 (GVDGRTHTVG…WEYIMLVFLL (347 aa)) are lumenal. Residues 385–412 (THTVGGTVGQGLKSLTSFFNPGPQRQLQ) form an HVR1 region. N-linked (GlcNAc...) (high mannose) asparagine; by host glycans are attached at residues Asn417, Asn423, and Asn430. 4 cysteine pairs are disulfide-bonded: Cys429–Cys553, Cys452–Cys459, Cys487–Cys495, and Cys504–Cys509. N-linked (GlcNAc...) asparagine; by host glycosylation is present at Asn448. The HVR2 stretch occupies residues 475 to 479 (ATISG). Positions 481–494 (SDDKPYCWHYPPRP) are CD81-binding 1. N-linked (GlcNAc...) asparagine; by host glycosylation occurs at Asn533. Positions 545–552 (PPAGNWFG) are CD81-binding 2. An N-linked (GlcNAc...) asparagine; by host glycan is attached at Asn557. The cysteines at positions 565 and 570 are disulfide-linked. N-linked (GlcNAc...) asparagine; by host glycosylation is present at Asn578. 3 disulfides stabilise this stretch: Cys582-Cys586, Cys598-Cys621, and Cys608-Cys645. 2 N-linked (GlcNAc...) (high mannose) asparagine; by host glycosylation sites follow: Asn624 and Asn646. Cysteines 653 and 678 form a disulfide. The segment at 661–672 (AELSPLLHTTTQ) is PKR/eIF2-alpha phosphorylation homology domain (PePHD). A helical transmembrane segment spans residues 727–747 (LADARICTCLLILLLICQAEA). The Lumenal portion of the chain corresponds to 748-758 (TCKNVIVLNAA). The chain crosses the membrane as a helical span at residues 759-779 (AAAGNHGFFWGLLVVCLAWHV). Residues 780–783 (KGRL) are Cytoplasmic-facing. Residues 784-804 (VPGATYLCLGVWPLLLVRLLR) form a helical membrane-spanning segment. At 805–814 (PHRALALDSS) the chain is on the lumenal side. The helical transmembrane segment at 815–835 (DGGTVGCLVLIVLTIFTLTPG) threads the bilayer. The Cytoplasmic segment spans residues 836–882 (YKKKVVLVMWWLQYFIARVEAIIHVWVPPLQVKGGRDAVIMLTCLFH). Residues 883–903 (PALGFEITKILFGILGPLYLL) form a helical membrane-spanning segment. Topologically, residues 904–929 (QHSLTKVPYFLRARALLRLCLLAKHL) are lumenal. Positions 904-1027 (QHSLTKVPYF…DIKTSGWRLL (124 aa)) constitute a Peptidase C18 domain. The tract at residues 905–1207 (HSLTKVPYFL…PVENLETTMR (303 aa)) is protease NS2-3. The S-palmitoyl cysteine; by host moiety is linked to residue Cys923. Residues 930 to 950 (VYGKYVQAALLHLGRLTGTYI) form a helical membrane-spanning segment. Residues 930-950 (VYGKYVQAALLHLGRLTGTYI) form an interaction with host SCPS1 region. Over 951–1658 (YDHLAPMKDW…CMSADLEVIT (708 aa)) the chain is Cytoplasmic. Catalysis depends on for protease NS2 activity; shared with dimeric partner residues His953, Glu973, and Cys994. One can recognise a Peptidase S29 domain in the interval 1028–1209 (APITAYAQQT…ENLETTMRSP (182 aa)). Catalysis depends on charge relay system; for serine protease NS3 activity residues His1084 and Asp1108. 2 residues coordinate Zn(2+): Cys1124 and Cys1126. Ser1166 functions as the Charge relay system; for serine protease NS3 activity in the catalytic mechanism. Zn(2+)-binding residues include Cys1172 and His1176. Positions 1218-1351 (PAVPHEFQVG…ARLVVLATAI (134 aa)) constitute a Helicase ATP-binding domain. Position 1231-1238 (1231-1238 (APTGSGKS)) interacts with ATP. Ser1238 and Glu1318 together coordinate Mg(2+). Residues 1317-1320 (DECH) carry the DECH box motif. The Helicase C-terminal domain maps to 1362–1539 (NIEEVALPSE…DLTPAETTVR (178 aa)). The tract at residues 1487 to 1499 (QRRGRTGRGRHGI) is RNA-binding. The helical transmembrane segment at 1659 to 1679 (STWVLVGGVVAALAAYCLTVG) threads the bilayer. The segment at 1680-1691 (SVAIVGRIILSG) is NS3-binding. Residues 1680 to 1806 (SVAIVGRIIL…AVTSPLTTHQ (127 aa)) lie on the Cytoplasmic side of the membrane. The chain crosses the membrane as a helical span at residues 1807-1827 (TLLFNILGGWVASQIAPPTAA). Over 1828 to 1829 (TA) the chain is Lumenal. The chain crosses the membrane as a helical span at residues 1830–1850 (FVVSGMAGAAVGNIGLGRVLI). Asp1851 is a topological domain (cytoplasmic). A helical transmembrane segment spans residues 1852 to 1872 (ILAGYGTGVAGALVAFKIMCG). Residues 1873–1882 (ERPTAEELVN) are Lumenal-facing. A helical transmembrane segment spans residues 1883-1903 (LLPSILCPGALVVGVICAAVL). The Cytoplasmic segment spans residues 1904–1973 (RRHIGPGEGA…WIGEDYSTPC (70 aa)). Cys1973 carries the S-palmitoyl cysteine; by host lipid modification. An intramembrane segment occupies 1974–2003 (DGTWLRAIWDWVCTALTDFKAWLQAKLLPQ). The Cytoplasmic portion of the chain corresponds to 2004 to 2993 (LPGVPFFSCQ…YHSMSRARPR (990 aa)). Zn(2+)-binding residues include Cys2012, Cys2030, Cys2032, and Cys2053. Residues 2121–2209 (EFFTELDGVR…ANSSASQLSA (89 aa)) form an FKBP8-binding region. The interval 2121–2334 (EFFTELDGVR…VPLPRRKRKP (214 aa)) is transcriptional activation. The interval 2136–2140 (PPCNP) is interaction with non-structural protein 4A. The interval 2190–2441 (RLNRGSPPSL…ALITPCSAEE (252 aa)) is interaction with host SKP2. A phosphoserine; by host mark is found at Ser2195, Ser2198, Ser2202, Ser2205, Ser2208, and Ser2211. The segment at 2211 to 2250 (SLKATCTIQGHHPDADLIKANLLWRQCMGGNITRVEAENK) is ISDR. Residues 2211-2276 (SLKATCTIQG…REISVSADCF (66 aa)) are interaction with EIF2AK2/PKR. Residues 2250–2307 (KVEILDCFKPLKEEEDDREISVSADCFKKGPAFPPALPVWARPGYDPPLLETWKRPDY) form an NS4B-binding region. A V3 region spans residues 2300–2378 (ETWKRPDYDP…GTSSQHDSGP (79 aa)). Disordered stretches follow at residues 2315-2342 (CPIP…DSTV) and 2359-2412 (PSIE…GSWS). Over residues 2316-2327 (PIPPAGPPPVPL) the composition is skewed to pro residues. Positions 2323-2326 (PPVP) match the SH3-binding motif. The Nuclear localization signal signature appears at 2328–2337 (PRRKRKPMEL). A compositionally biased stretch (polar residues) spans 2361–2375 (IEGQDSALGTSSQHD). Residues 2376–2385 (SGPEEKRDDN) show a composition bias toward basic and acidic residues. Ser2465 is modified (phosphoserine; by host). The RdRp catalytic domain maps to 2637–2755 (PMAFSYDTRC…ICESQGTHED (119 aa)). Mg(2+) is bound by residues Asp2643, Asp2741, and Asp2742. The chain crosses the membrane as a helical span at residues 2994-3014 (NLLLCLLLLSVGVGIFLLPAR).

This sequence belongs to the hepacivirus polyprotein family. In terms of assembly, homooligomer. Interacts with E1 (via C-terminus). Interacts with the non-structural protein 5A. Interacts (via N-terminus) with host STAT1 (via SH2 domain); this interaction results in decreased STAT1 phosphorylation and ubiquitin-mediated proteasome-dependent STAT1 degradation, leading to decreased IFN-stimulated gene transcription. Interacts with host STAT3; this interaction constitutively activates STAT3. Interacts with host LTBR receptor. Interacts with host TNFRSF1A receptor and possibly induces apoptosis. Interacts with host HNRPK. Interacts with host YWHAE. Interacts with host UBE3A/E6AP. Interacts with host DDX3X. Interacts with host APOA2. Interacts with host RXRA protein. Interacts with host SP110 isoform 3/Sp110b; this interaction sequesters the transcriptional corepressor SP110 away from the nucleus. Interacts with host CREB3 nuclear transcription protein; this interaction triggers cell transformation. Interacts with host ACY3. Interacts with host C1QR1. Interacts with host RBM24; this interaction, which enhances the interaction of the mature core protein with 5'-UTR, may inhibit viral translation and favor replication. Interacts with host EIF2AK2/PKR; this interaction induces the autophosphorylation of EIF2AK2. Part of the viral assembly initiation complex composed of NS2, E1, E2, NS3, NS4A, NS5A and the mature core protein. Forms a heterodimer with envelope glycoprotein E2. Interacts with mature core protein. Interacts with protease NS2. The heterodimer E1/E2 interacts with host CLDN1; this interaction plays a role in viral entry into host cell. Interacts with host SPSB2 (via C-terminus). Part of the viral assembly initiation complex composed of NS2, E1, E2, NS3, NS4A, NS5A and the mature core protein. Interacts with host NEURL3; this interaction prevents E1 binding to glycoprotein E2. As to quaternary structure, forms a heterodimer with envelope glycoprotein E1. Interacts with host CD81 and SCARB1 receptors; these interactions play a role in viral entry into host cell. Interacts with host EIF2AK2/PKR; this interaction inhibits EIF2AK2 and probably allows the virus to evade the innate immune response. Interacts with host CD209/DC-SIGN and CLEC4M/DC-SIGNR. Interact with host SPCS1; this interaction is essential for viral particle assembly. Interacts with protease NS2. The heterodimer E1/E2 interacts with host CLDN1; this interaction plays a role in viral entry into host cell. Part of the viral assembly initiation complex composed of NS2, E1, E2, NS3, NS4A, NS5A and the mature core protein. Interacts with host SLC3A2/4F2hc; the interaction may facilitate viral entry into host cell. Interacts with human PLSCR1. In terms of assembly, homohexamer. Homoheptamer. Interacts with protease NS2. Homodimer. Interacts with host SPCS1; this interaction is essential for viral particle assembly. Interacts with envelope glycoprotein E1. Interacts with envelope glycoprotein E2. Interacts with viroporin p7. Interacts with serine protease/helicase NS3. Part of the replication complex composed of NS2, NS3, NS4A, NS4B, NS5A and the RNA-directed RNA polymerase embedded in an ER-derived membranous web. Part of the viral assembly initiation complex composed of NS2, E1, E2, NS3, NS4A, NS5A and the mature core protein. As to quaternary structure, interacts with protease NS2. Interacts with non-structural protein 4A; this interaction stabilizes the folding of NS3 serine protease. NS3-NS4A interaction is essential for NS3 activation and allows membrane anchorage of the latter. NS3/NS4A complex also prevents phosphorylation of host IRF3, thus preventing the establishment of dsRNA induced antiviral state. Interacts with host MAVS; this interaction leads to the cleavage and inhibition of host MAVS. Interacts with host TICAM1; this interaction leads to the cleavage and inhibition of host TICAM1. Interacts with host TANK-binding kinase/TBK1; this interaction results in the inhibition of the association between TBK1 and IRF3, which leads to the inhibition of IRF3 activation. Interacts with host RBM24. Part of the replication complex composed of NS2, NS3, NS4A, NS4B, NS5A and the RNA-directed RNA polymerase embedded in an ER-derived membranous web. Part of the viral assembly initiation complex composed of NS2, E1, E2, NS3, NS4A, NS5A and the mature core protein. In terms of assembly, interacts with NS3 serine protease; this interaction stabilizes the folding of NS3 serine protease. NS3-NS4A interaction is essential for NS3 activation and allows membrane anchorage of the latter. Interacts with non-structural protein 5A (via N-terminus). Part of the replication complex composed of NS2, NS3, NS4A, NS4B, NS5A and the RNA-directed RNA polymerase embedded in an ER-derived membranous web. Part of the viral assembly initiation complex composed of NS2, E1, E2, NS3, NS4A, NS5A and the mature core protein. Homomultimer. Interacts with non-structural protein NS5A. Interacts with host PLA2G4C; this interaction likely initiates the recruitment of replication complexes to lipid droplets. Interacts with host STING; this interaction disrupts the interaction between STING and TBK1 thereby suppressing the interferon signaling. Part of the replication complex composed of NS2, NS3, NS4A, NS4B, NS5A and the RNA-directed RNA polymerase embedded in an ER-derived membranous web. As to quaternary structure, monomer. Homodimer; dimerization is required for RNA-binding. Interacts with the mature core protein. Interacts (via N-terminus) with non-structural protein 4A. Interacts with non-structural protein 4B. Interacts (via region D2) with RNA-directed RNA polymerase. Part of the viral assembly initiation complex composed of NS2, E1, E2, NS3, NS4A, NS5A and the mature core protein. Part of the replication complex composed of NS2, NS3, NS4A, NS4B, NS5A and the RNA-directed RNA polymerase embedded in an ER-derived membranous web. Interacts with host GRB2. Interacts with host BIN1. Interacts with host PIK3R1. Interacts with host SRCAP. Interacts with host FKBP8. Interacts (via C-terminus) with host VAPB (via MSP domain). Interacts with host EIF2AK2/PKR; this interaction leads to disruption of EIF2AK2 dimerization by NS5A and probably allows the virus to evade the innate immune response. Interacts (via N-terminus) with host PACSIN2 (via N-terminus); this interaction attenuates protein kinase C alpha-mediated phosphorylation of PACSIN2 by disrupting the interaction between PACSIN2 and PRKCA. Interacts (via N-terminus) with host SRC kinase (via SH2 domain). Interacts with most Src-family kinases. Interacts with host IFI27 and SKP2; promotes the ubiquitin-mediated proteasomal degradation of NS5A. Interacts with host GPS2. Interacts with host TNFRSF21; this interaction allows the modulation by the virus of JNK, p38 MAPK, STAT3, and Akt signaling pathways in a DR6-dependent manner. Interacts (via N-terminus) with host CIDEB (via N-terminus); this interaction seems to regulate the association of HCV particles with APOE. Interacts with host CHKA/Choline Kinase-alpha; CHKA bridges host PI4KA and NS5A and potentiates NS5A-stimulated PI4KA activity, which then facilitates the targeting of the ternary complex to the ER for viral replication. Interacts with host SPSB2 (via C-terminus); this interaction targets NS5A for ubiquitination and degradation. Interacts with host RAB18; this interaction may promote the association of NS5A and other replicase components with lipid droplets. Interacts (via region D2) with host PPIA/CYPA; the interaction stimulates RNA-binding ability of NS5A and is dependent on the peptidyl-prolyl cis-trans isomerase activity of PPIA/CYPA. Interacts with host TRIM14; this interaction induces the degradation of NS5A. In terms of assembly, homooligomer. Interacts with non-structural protein 5A. Interacts with host VAPB. Interacts with host PRK2/PKN2. Interacts with host HNRNPA1 and SEPT6; these interactions facilitate viral replication. Part of the replication complex composed of NS2, NS3, NS4A, NS4B, NS5A and the RNA-directed RNA polymerase. Zn(2+) serves as cofactor. Requires Mg(2+) as cofactor. Post-translationally, specific enzymatic cleavages in vivo yield mature proteins. The structural proteins, core, E1, E2 and p7 are produced by proteolytic processing by host signal peptidases. The core protein precursor is synthesized as a 23 kDa, which is retained in the ER membrane through the hydrophobic signal peptide. Cleavage by the signal peptidase releases the 21 kDa mature core protein. The cleavage of the core protein precursor occurs between aminoacids 176 and 188 but the exact cleavage site is not known. Some degraded forms of the core protein appear as well during the course of infection. The other proteins (p7, NS2, NS3, NS4A, NS4B, NS5A and NS5B) are cleaved by the viral proteases. Autoprocessing between NS2 and NS3 is mediated by the NS2 cysteine protease catalytic domain and regulated by the NS3 N-terminal domain. In terms of processing, phosphorylated by host PKC and PKA. Ubiquitinated; mediated by UBE3A and leading to core protein subsequent proteasomal degradation. Post-translationally, highly N-glycosylated. In terms of processing, palmitoylation is required for NS2/3 autoprocessing and E2 recruitment to membranes. Palmitoylated. This modification may play a role in its polymerization or in protein-protein interactions. Post-translationally, phosphorylated on serines in a basal form termed p56. p58 is a hyperphosphorylated form of p56. p56 and p58 coexist in the cell in roughly equivalent amounts. Hyperphosphorylation is dependent on the presence of NS4A. Host CSNK1A1/CKI-alpha or RPS6KB1 kinases may be responsible for NS5A phosphorylation. In terms of processing, tyrosine phosphorylation is essential for the interaction with host SRC. The N-terminus is phosphorylated by host PRK2/PKN2.

The protein resides in the host endoplasmic reticulum membrane. It localises to the host mitochondrion membrane. It is found in the virion. The protein localises to the host cytoplasm. Its subcellular location is the host nucleus. The protein resides in the host lipid droplet. It localises to the virion membrane. It is found in the host mitochondrion. The protein localises to the host cell membrane. Its subcellular location is the host perinuclear region. The enzyme catalyses Hydrolysis of four peptide bonds in the viral precursor polyprotein, commonly with Asp or Glu in the P6 position, Cys or Thr in P1 and Ser or Ala in P1'.. It catalyses the reaction a ribonucleoside 5'-triphosphate + H2O = a ribonucleoside 5'-diphosphate + phosphate + H(+). The catalysed reaction is ATP + H2O = ADP + phosphate + H(+). It carries out the reaction RNA(n) + a ribonucleoside 5'-triphosphate = RNA(n+1) + diphosphate. Inhibited by the antiviral drug hexamethylene amiloride. Inhibition by amantadine appears to be genotype-dependent. Also inhibited by long-alkyl-chain iminosugar derivatives. Its activity is regulated as follows. Activity is up-regulated by PRK2/PKN2-mediated phosphorylation. Packages viral RNA to form a viral nucleocapsid, and promotes virion budding. Participates in the viral particle production as a result of its interaction with the non-structural protein 5A. Binds RNA and may function as a RNA chaperone to induce the RNA structural rearrangements taking place during virus replication. Modulates viral translation initiation by interacting with viral IRES and 40S ribosomal subunit. Affects various cell signaling pathways, host immunity and lipid metabolism. Prevents the establishment of cellular antiviral state by blocking the interferon-alpha/beta (IFN-alpha/beta) and IFN-gamma signaling pathways and by blocking the formation of phosphorylated STAT1 and promoting ubiquitin-mediated proteasome-dependent degradation of STAT1. Activates STAT3 leading to cellular transformation. Regulates the activity of cellular genes, including c-myc and c-fos. May repress the promoter of p53, and sequester CREB3 and SP110 isoform 3/Sp110b in the cytoplasm. Represses cell cycle negative regulating factor CDKN1A, thereby interrupting an important check point of normal cell cycle regulation. Targets transcription factors involved in the regulation of inflammatory responses and in the immune response: suppresses TNF-induced NF-kappa-B activation, and activates AP-1. Binds to dendritic cells (DCs) via C1QR1, resulting in down-regulation of T-lymphocytes proliferation. Alters lipid metabolism by interacting with hepatocellular proteins involved in lipid accumulation and storage. Induces up-regulation of FAS promoter activity, and thereby contributes to the increased triglyceride accumulation in hepatocytes (steatosis). Functionally, forms a heterodimer with envelope glycoprotein E2, which mediates virus attachment to the host cell, virion internalization through clathrin-dependent endocytosis and fusion with host membrane. Fusion with the host cell is most likely mediated by both E1 and E2, through conformational rearrangements of the heterodimer required for fusion rather than a classical class II fusion mechanism. E1/E2 heterodimer binds host apolipoproteins such as APOB and ApoE thereby forming a lipo-viro-particle (LVP). APOE associated to the LVP allows the initial virus attachment to cell surface receptors such as the heparan sulfate proteoglycans (HSPGs), syndecan-1 (SDC1), syndecan-1 (SDC2), the low-density lipoprotein receptor (LDLR) and scavenger receptor class B type I (SCARB1). The cholesterol transfer activity of SCARB1 allows E2 exposure and binding of E2 to SCARB1 and the tetraspanin CD81. E1/E2 heterodimer binding on CD81 activates the epithelial growth factor receptor (EGFR) signaling pathway. Diffusion of the complex E1-E2-EGFR-SCARB1-CD81 to the cell lateral membrane allows further interaction with Claudin 1 (CLDN1) and occludin (OCLN) to finally trigger HCV entry. In terms of biological role, forms a heterodimer with envelope glycoprotein E1, which mediates virus attachment to the host cell, virion internalization through clathrin-dependent endocytosis and fusion with host membrane. Fusion with the host cell is most likely mediated by both E1 and E2, through conformational rearrangements of the heterodimer required for fusion rather than a classical class II fusion mechanism. The interaction between envelope glycoprotein E2 and host apolipoprotein E/APOE allows the proper assembly, maturation and infectivity of the viral particles. This interaction is probably promoted via the up-regulation of cellular autophagy by the virus. E1/E2 heterodimer binds host apolipoproteins such as APOB and APOE thereby forming a lipo-viro-particle (LVP). APOE associated to the LVP allows the initial virus attachment to cell surface receptors such as the heparan sulfate proteoglycans (HSPGs), syndecan-1 (SDC1), syndecan-1 (SDC2), the low-density lipoprotein receptor (LDLR) and scavenger receptor class B type I (SCARB1). The cholesterol transfer activity of SCARB1 allows E2 exposure and binding of E2 to SCARB1 and the tetraspanin CD81. E1/E2 heterodimer binding on CD81 activates the epithelial growth factor receptor (EGFR) signaling pathway. Diffusion of the complex E1-E2-EGFR-SCARB1-CD81 to the cell lateral membrane allows further interaction with Claudin 1 (CLDN1) and occludin (OCLN) to finally trigger HCV entry. Inhibits host EIF2AK2/PKR activation, preventing the establishment of an antiviral state. Viral ligand for CD209/DC-SIGN and CLEC4M/DC-SIGNR, which are respectively found on dendritic cells (DCs), and on liver sinusoidal endothelial cells and macrophage-like cells of lymph node sinuses. These interactions allow the capture of circulating HCV particles by these cells and subsequent facilitated transmission to permissive cells such as hepatocytes and lymphocyte subpopulations. The interaction between E2 and host amino acid transporter complex formed by SLC3A2 and SLC7A5/LAT1 may facilitate viral entry into host cell. Its function is as follows. Ion channel protein that acts as a viroporin and plays an essential role in the assembly, envelopment and secretion of viral particles. Regulates the host cell secretory pathway, which induces the intracellular retention of viral glycoproteins and favors assembly of viral particles. Creates a pore in acidic organelles and releases Ca(2+) and H(+) in the cytoplasm of infected cells, leading to a productive viral infection. High levels of cytoplasmic Ca(2+) may trigger membrane trafficking and transport of viral ER-associated proteins to viroplasms, sites of viral genome replication. This ionic imbalance induces the assembly of the inflammasome complex, which triggers the maturation of pro-IL-1beta into IL-1beta through the action of caspase-1. Targets also host mitochondria and induces mitochondrial depolarization. In addition of its role as a viroporin, acts as a lipid raft adhesion factor. Cysteine protease required for the proteolytic auto-cleavage between the non-structural proteins NS2 and NS3. The N-terminus of NS3 is required for the function of NS2 protease (active region NS2-3). Promotes the initiation of viral particle assembly by mediating the interaction between structural and non-structural proteins. Functionally, displays three enzymatic activities: serine protease with a chymotrypsin-like fold, NTPase and RNA helicase. NS3 serine protease, in association with NS4A, is responsible for the cleavages of NS3-NS4A, NS4A-NS4B, NS4B-NS5A and NS5A-NS5B. The NS3/NS4A complex prevents phosphorylation of host IRF3, thus preventing the establishment of dsRNA induced antiviral state. The NS3/NS4A complex induces host amino acid transporter component SLC3A2, thus contributing to HCV propagation. NS3 RNA helicase binds to RNA and unwinds both dsDNA and dsRNA in the 3' to 5' direction, and likely resolves RNA complicated stable secondary structures in the template strand. Binds a single ATP and catalyzes the unzipping of a single base pair of dsRNA. Inhibits host antiviral proteins TBK1 and IRF3 thereby preventing the establishment of an antiviral state. Cleaves host MAVS/CARDIF thereby preventing the establishment of an antiviral state. Cleaves host TICAM1/TRIF, thereby disrupting TLR3 signaling and preventing the establishment of an antiviral state. In terms of biological role, induces a specific membrane alteration that serves as a scaffold for the virus replication complex. This membrane alteration gives rise to the so-called ER-derived membranous web that contains the replication complex. NS4B self-interaction contributes to its function in membranous web formation. Promotes host TRIF protein degradation in a CASP8-dependent manner thereby inhibiting host TLR3-mediated interferon signaling. Disrupts the interaction between STING and TBK1 contributing to the inhibition of interferon signaling. Its function is as follows. Phosphorylated protein that is indispensable for viral replication and assembly. Both hypo- and hyperphosphorylated states are required for the viral life cycle. The hyperphosphorylated form of NS5A is an inhibitor of viral replication. Involved in RNA-binding and especially in binding to the viral genome. Zinc is essential for RNA-binding. Participates in the viral particle production as a result of its interaction with the mature viral core protein. Its interaction with host VAPB may target the viral replication complex to vesicles. Down-regulates viral IRES translation initiation. Mediates interferon resistance, presumably by interacting with and inhibiting host EIF2AK2/PKR. Prevents BIN1-induced apoptosis. Acts as a transcriptional activator of some host genes important for viral replication when localized in the nucleus. Via the interaction with host PACSIN2, modulates lipid droplet formation in order to promote virion assembly. Modulates TNFRSF21/DR6 signaling pathway for viral propagation. RNA-dependent RNA polymerase that performs primer-template recognition and RNA synthesis during viral replication. Initiates RNA transcription/replication at a flavin adenine dinucleotide (FAD), resulting in a 5'- FAD cap on viral RNAs. In this way, recognition of viral 5' RNA by host pattern recognition receptors can be bypassed, thereby evading activation of antiviral pathways. This Hepatitis C virus genotype 5a (isolate EUH1480) (HCV) protein is Genome polyprotein.